Consider the following 248-residue polypeptide: DNA polymerase sliding clamp 2 (248 aa).

This sequence belongs to the PCNA family. As to quaternary structure, the subunits circularize to form a toroid; DNA passes through its center. Replication factor C (RFC) is required to load the toroid on the DNA. Forms a dimeric complex with PCNA3 and trimeric complexes PCNA123 and PCNA323; does not form homotrimers. Crystal structures show a heterotetramer of 2 PCNA2 and 2 PCNA3, which would be large enough to clamp a Holliday junction.

Sliding clamp subunit that acts as a moving platform for DNA processing. Responsible for tethering the catalytic subunit of DNA polymerase and other proteins to DNA during high-speed replication. Both trimeric complexes inhibit DNA ligase and both 3'-5' and 5'-3' activity of Hel308 (Hjm) helicase, but stimulate Hjc, the Holliday junction cleavage enzyme. This Sulfurisphaera tokodaii (strain DSM 16993 / JCM 10545 / NBRC 100140 / 7) (Sulfolobus tokodaii) protein is DNA polymerase sliding clamp 2.